The sequence spans 276 residues: Lyso-ornithine lipid O-acyltransferase (276 aa).

A helical transmembrane segment spans residues 25-47 (LALRGGAMALVLMAGLTLHLAVR).

This sequence belongs to the 1-acyl-sn-glycerol-3-phosphate acyltransferase family. OlsA subfamily.

The protein resides in the membrane. The catalysed reaction is a lyso-ornithine lipid + a fatty acyl-[ACP] = an N(2)-[(3R)-3-(acyloxy)acyl]-L-ornithine lipid + holo-[ACP]. It catalyses the reaction a fatty acyl-[ACP] + a 1-acyl-sn-glycero-3-phosphate = a 1,2-diacyl-sn-glycero-3-phosphate + holo-[ACP]. The protein operates within lipid metabolism. It functions in the pathway phospholipid metabolism. Catalyzes the second step in the formation of ornithine lipids, which are phosphorus-free membrane lipids. Uses acyl-acyl carrier protein (acyl-AcpP) as an acyl donor and converts lyso-ornithine lipid (LOL) into ornithine lipid (OL). It can also act as an alternate acyl-sn-glycerol-3-phosphate acyltransferase (AGPAT) to ensure glycerophospholipid production. The protein is Lyso-ornithine lipid O-acyltransferase of Rhodobacter capsulatus (strain ATCC BAA-309 / NBRC 16581 / SB1003).